Reading from the N-terminus, the 314-residue chain is tRNA dimethylallyltransferase 1 (314 aa).

Residue 8 to 15 coordinates ATP; that stretch reads GPTGTGKS. 10-15 lines the substrate pocket; the sequence is TGTGKS.

Belongs to the IPP transferase family. In terms of assembly, monomer. Requires Mg(2+) as cofactor.

The enzyme catalyses adenosine(37) in tRNA + dimethylallyl diphosphate = N(6)-dimethylallyladenosine(37) in tRNA + diphosphate. Its function is as follows. Catalyzes the transfer of a dimethylallyl group onto the adenine at position 37 in tRNAs that read codons beginning with uridine, leading to the formation of N6-(dimethylallyl)adenosine (i(6)A). The sequence is that of tRNA dimethylallyltransferase 1 from Mycobacterium marinum (strain ATCC BAA-535 / M).